The chain runs to 215 residues: Cytochrome b6 (215 aa).

The chain crosses the membrane as a helical span at residues 32 to 52 (IFYCLGGVTLVCFIIQFATGF). C35 serves as a coordination point for heme c. H86 and H100 together coordinate heme b. The next 3 helical transmembrane spans lie at 90 to 110 (ASMM…TGGF), 116 to 136 (LTWI…VTGY), and 186 to 206 (LHTF…FLMI). The heme b site is built by H187 and H202.

Belongs to the cytochrome b family. PetB subfamily. The 4 large subunits of the cytochrome b6-f complex are cytochrome b6, subunit IV (17 kDa polypeptide, PetD), cytochrome f and the Rieske protein, while the 4 small subunits are PetG, PetL, PetM and PetN. The complex functions as a dimer. Heme b serves as cofactor. Requires heme c as cofactor.

The protein resides in the cellular thylakoid membrane. Its function is as follows. Component of the cytochrome b6-f complex, which mediates electron transfer between photosystem II (PSII) and photosystem I (PSI), cyclic electron flow around PSI, and state transitions. The polypeptide is Cytochrome b6 (Acaryochloris marina (strain MBIC 11017)).